We begin with the raw amino-acid sequence, 122 residues long: Large ribosomal subunit protein uL18 (122 aa).

It belongs to the universal ribosomal protein uL18 family. In terms of assembly, part of the 50S ribosomal subunit; part of the 5S rRNA/L5/L18/L25 subcomplex. Contacts the 5S and 23S rRNAs.

Its function is as follows. This is one of the proteins that bind and probably mediate the attachment of the 5S RNA into the large ribosomal subunit, where it forms part of the central protuberance. The sequence is that of Large ribosomal subunit protein uL18 from Lachnoclostridium phytofermentans (strain ATCC 700394 / DSM 18823 / ISDg) (Clostridium phytofermentans).